The sequence spans 268 residues: 3-deoxy-manno-octulosonate cytidylyltransferase (268 aa).

Belongs to the KdsB family.

It localises to the cytoplasm. The enzyme catalyses 3-deoxy-alpha-D-manno-oct-2-ulosonate + CTP = CMP-3-deoxy-beta-D-manno-octulosonate + diphosphate. The protein operates within nucleotide-sugar biosynthesis; CMP-3-deoxy-D-manno-octulosonate biosynthesis; CMP-3-deoxy-D-manno-octulosonate from 3-deoxy-D-manno-octulosonate and CTP: step 1/1. It participates in bacterial outer membrane biogenesis; lipopolysaccharide biosynthesis. Activates KDO (a required 8-carbon sugar) for incorporation into bacterial lipopolysaccharide in Gram-negative bacteria. This chain is 3-deoxy-manno-octulosonate cytidylyltransferase, found in Ralstonia pickettii (strain 12J).